Reading from the N-terminus, the 561-residue chain is Zinc finger protein 394 (561 aa).

Ser12 carries the post-translational modification Phosphoserine. Lys40 participates in a covalent cross-link: Glycyl lysine isopeptide (Lys-Gly) (interchain with G-Cter in SUMO2). The segment at Glu43–Thr62 is disordered. Positions Arg64–Leu146 constitute an SCAN box domain. The KRAB domain occupies Val155–Pro230. Residues Lys203 and Lys228 each participate in a glycyl lysine isopeptide (Lys-Gly) (interchain with G-Cter in SUMO2) cross-link. Basic and acidic residues predominate over residues Thr238–Ser247. A disordered region spans residues Thr238–Asn283. A Glycyl lysine isopeptide (Lys-Gly) (interchain with G-Cter in SUMO2) cross-link involves residue Lys254. The span at Asn265 to Gly274 shows a compositional bias: polar residues. Lys282 is covalently cross-linked (Glycyl lysine isopeptide (Lys-Gly) (interchain with G-Cter in SUMO2)). 7 consecutive C2H2-type zinc fingers follow at residues Tyr358–His380, Tyr386–His408, Tyr414–His436, Phe442–His463, Tyr469–His491, Tyr497–His519, and Tyr525–His547. Residue Lys443 forms a Glycyl lysine isopeptide (Lys-Gly) (interchain with G-Cter in SUMO2) linkage.

It belongs to the krueppel C2H2-type zinc-finger protein family.

It localises to the nucleus. May be involved in transcriptional regulation. The chain is Zinc finger protein 394 (ZNF394) from Pan paniscus (Pygmy chimpanzee).